The chain runs to 1040 residues: Multidrug resistance protein MdtB (1040 aa).

12 helical membrane-spanning segments follow: residues 16–36, 347–367, 369–389, 396–416, 440–460, 472–492, 537–557, 863–883, 888–908, 911–931, 968–988, and 998–1018; these read FIMRPVATTLLMVAILLAGII, LMMAIALVVMIIYLFLRNIPA, IIPGVAVPLSLIGTFAVMVFL, LTLMALTIATGFVVDDAIVVI, IGFTIISLTFSLIAVLIPLLF, FAITLAVAILISAVVSLTLTP, WLTLSVALSTLLLSVLLWVFI, LGSTVWLIVAAVVAMYIVLGI, FIHPITILSTLPTAGVGALLA, IAGSELDVIAIIGIILLIGIV, ILMTTLAALLGALPLMLSTGV, and IGMVGGLIVSQVLTLFTTPVI.

The protein belongs to the resistance-nodulation-cell division (RND) (TC 2.A.6) family. MdtB subfamily. In terms of assembly, part of a tripartite efflux system composed of MdtA, MdtB and MdtC. MdtB forms a heteromultimer with MdtC.

It localises to the cell inner membrane. Its function is as follows. The MdtABC tripartite complex confers resistance against novobiocin and deoxycholate. The sequence is that of Multidrug resistance protein MdtB from Escherichia coli O9:H4 (strain HS).